Consider the following 191-residue polypeptide: Elongation factor P (191 aa).

This sequence belongs to the elongation factor P family.

It localises to the cytoplasm. The protein operates within protein biosynthesis; polypeptide chain elongation. Involved in peptide bond synthesis. Stimulates efficient translation and peptide-bond synthesis on native or reconstituted 70S ribosomes in vitro. Probably functions indirectly by altering the affinity of the ribosome for aminoacyl-tRNA, thus increasing their reactivity as acceptors for peptidyl transferase. This is Elongation factor P from Janthinobacterium sp. (strain Marseille) (Minibacterium massiliensis).